We begin with the raw amino-acid sequence, 220 residues long: Inner membrane-spanning protein YciB (220 aa).

A run of 6 helical transmembrane segments spans residues 20 to 40 (EVPPLLKLALELGPLLVFFFA), 57 to 77 (IGAPIFLATALFMGATVIALA), 86 to 106 (LPIMPLVSGIVVLVFGALTLW), 123 to 143 (LFGAILLGGLFFGKSLLGYVF), 156 to 176 (KLTLRWGLFFIFLAVVNEVVW), and 187 to 207 (FKVWGIMPITIVFTLLQMPLI).

The protein belongs to the YciB family.

It is found in the cell inner membrane. In terms of biological role, plays a role in cell envelope biogenesis, maintenance of cell envelope integrity and membrane homeostasis. The polypeptide is Inner membrane-spanning protein YciB (Brucella anthropi (strain ATCC 49188 / DSM 6882 / CCUG 24695 / JCM 21032 / LMG 3331 / NBRC 15819 / NCTC 12168 / Alc 37) (Ochrobactrum anthropi)).